Consider the following 354-residue polypeptide: Trans-L-3-hydroxyproline dehydratase (354 aa).

The active-site Proton acceptor is C104. Substrate is bound by residues 105 to 106, D269, and 274 to 275; these read GH and GS.

It belongs to the proline racemase family. Homodimer.

It catalyses the reaction trans-3-hydroxy-L-proline = 1-pyrroline-2-carboxylate + H2O. In terms of biological role, catalyzes the dehydration of trans-3-hydroxy-L-proline to Delta(1)-pyrroline-2-carboxylate (Pyr2C). This Bos taurus (Bovine) protein is Trans-L-3-hydroxyproline dehydratase (L3HYPDH).